Here is a 226-residue protein sequence, read N- to C-terminus: Thioredoxin domain-containing protein 9 (226 aa).

The region spanning 75–180 (EIGSERDFFQ…TTETLEWRLG (106 aa)) is the Thioredoxin domain. A phosphoserine mark is found at S188, S221, and S223.

Forms ternary complexes with the chaperonin TCP1 complex, spanning the cylindrical chaperonin cavity and contacting at least 2 subunits. Expressed in testis, liver, heart, kidney, brain, spleen and lung.

The protein resides in the cytoplasm. The protein localises to the nucleus. It localises to the cytoskeleton. Its subcellular location is the microtubule organizing center. It is found in the centrosome. The protein resides in the midbody. Significantly diminishes the chaperonin TCP1 complex ATPase activity, thus negatively impacts protein folding, including that of actin or tubulin. The sequence is that of Thioredoxin domain-containing protein 9 (Txndc9) from Mus musculus (Mouse).